Consider the following 37-residue polypeptide: Calcitonin gene-related peptide 1 (37 aa).

Cys2 and Cys7 form a disulfide bridge. Phe37 carries the post-translational modification Phenylalanine amide.

This sequence belongs to the calcitonin family.

The protein resides in the secreted. In terms of biological role, CGRP1/CALCA is a peptide hormone that induces vasodilation mediated by the CALCRL-RAMP1 receptor complex. Dilates a variety of vessels including the coronary, cerebral and systemic vasculature. Its abundance in the CNS also points toward a neurotransmitter or neuromodulator role. It also elevates platelet cAMP. CGRP1 can also bind and activate CALCR-RAMP1 (AMYR1) receptor complex. The polypeptide is Calcitonin gene-related peptide 1 (CALCA) (Sus scrofa (Pig)).